The following is a 960-amino-acid chain: Leucine--tRNA ligase (960 aa).

A 'HIGH' region motif is present at residues P71–H82. The 'KMSKS' region signature appears at K729 to S733. K732 lines the ATP pocket.

It belongs to the class-I aminoacyl-tRNA synthetase family.

The protein localises to the cytoplasm. It carries out the reaction tRNA(Leu) + L-leucine + ATP = L-leucyl-tRNA(Leu) + AMP + diphosphate. The polypeptide is Leucine--tRNA ligase (Corynebacterium diphtheriae (strain ATCC 700971 / NCTC 13129 / Biotype gravis)).